Here is a 457-residue protein sequence, read N- to C-terminus: Multidrug resistance protein MdtK (457 aa).

12 helical membrane-spanning segments follow: residues 11-31, 53-73, 93-113, 127-147, 160-180, 188-208, 243-263, 276-296, 314-334, 350-370, 387-407, and 418-438; these read LLALAIPVILAQVAQTAMGFV, IWLPAILFGHGLLLALTPVIA, WLAGFVSVLVMIVLWNAGYII, AVGYLRALLWGAPGYLFFQVA, GMVMGFLGLLVNIPVNYIFIY, LGGIGCGVATAAVYWVMFIAM, LPIALALFFEVTLFAVVALLV, IALNFSSLMFVLPMSLAAAVT, AARTGLGVGICMAVVTAIFTV, VVALAAQLMLLAAVYQISDSI, IFFITFTAYWVLGLPSGYILA, and PAGFWMGFIIGLTSAAVLMML.

The protein belongs to the multi antimicrobial extrusion (MATE) (TC 2.A.66.1) family. MdtK subfamily.

It localises to the cell inner membrane. In terms of biological role, multidrug efflux pump that functions probably as a Na(+)/drug antiporter. The protein is Multidrug resistance protein MdtK of Salmonella heidelberg (strain SL476).